The sequence spans 119 residues: Microtubule nucleation factor SSNA1 (119 aa).

N-acetylthreonine is present on Thr2. Residues 2–32 are important for localization to the centrosome; the sequence is TQQGAALQNYNNELVKCIEELCQKREELCRQ. Residues 13 to 70 adopt a coiled-coil conformation; the sequence is NELVKCIEELCQKREELCRQIQEEEDEKQRLQNEVRQLTEKLARVNENLARKIASRNE.

It belongs to the SSNA1 family. As to quaternary structure, self-associates to form fibrils. Also forms dimers as well as monomers. Interacts with SPAST. Widely expressed.

It is found in the nucleus. The protein resides in the cytoplasm. The protein localises to the cytoskeleton. Its subcellular location is the microtubule organizing center. It localises to the centrosome. It is found in the centriole. The protein resides in the midbody. The protein localises to the flagellum basal body. Its subcellular location is the flagellum axoneme. It localises to the cell projection. It is found in the axon. Microtubule-binding protein which stabilizes dynamic microtubules by slowing growth and shrinkage at both plus and minus ends and serves as a sensor of microtubule damage, protecting microtubules from the microtubule-severing enzyme SPAST. Induces microtubule branching which is mediated by the formation of long SSNA1 fibrils which guide microtubule protofilaments to split apart from the mother microtubule and form daughter microtubules. Plays a role in axon outgrowth and branching. Required for cell division. In Homo sapiens (Human), this protein is Microtubule nucleation factor SSNA1.